Consider the following 132-residue polypeptide: Secreted RxLR effector protein BLR08 (132 aa).

The N-terminal stretch at 1-22 (MRHKCLLAMAVVASMAFYSVIS) is a signal peptide. The N-linked (GlcNAc...) asparagine glycan is linked to asparagine 25. Residues 36–57 (NRRLRPRVEPTANELDKQSDVD) are disordered. The RxLR-dEER signature appears at 37-83 (RRLRPRVEPTANELDKQSDVDTKLEADRRLGYPGESGFMLEGELEER). The chain crosses the membrane as a helical span at residues 111–131 (FFLGLFASVIGVSIISACYGI).

It belongs to the RxLR effector family. In terms of assembly, interacts with host transcription factor NAC069.

It is found in the secreted. Its subcellular location is the host endoplasmic reticulum membrane. Functionally, secreted effector that inhibits stress-induced relocalization of the transcription factor NAC069 to the nucleus, thus affecting its broad role in abiotic and biotic stress responses. This is Secreted RxLR effector protein BLR08 from Bremia lactucae (Lettuce downy mildew).